We begin with the raw amino-acid sequence, 455 residues long: Serine--tRNA ligase (455 aa).

Residue 252–254 participates in L-serine binding; it reads TSE. ATP contacts are provided by residues 283 to 285 and Val299; that span reads RKE. Glu306 is an L-serine binding site. 370–373 lines the ATP pocket; sequence EVVS. An L-serine-binding site is contributed by Thr406.

It belongs to the class-II aminoacyl-tRNA synthetase family. Type-1 seryl-tRNA synthetase subfamily. In terms of assembly, homodimer. The tRNA molecule binds across the dimer.

It localises to the cytoplasm. It carries out the reaction tRNA(Ser) + L-serine + ATP = L-seryl-tRNA(Ser) + AMP + diphosphate + H(+). The enzyme catalyses tRNA(Sec) + L-serine + ATP = L-seryl-tRNA(Sec) + AMP + diphosphate + H(+). Its pathway is aminoacyl-tRNA biosynthesis; selenocysteinyl-tRNA(Sec) biosynthesis; L-seryl-tRNA(Sec) from L-serine and tRNA(Sec): step 1/1. Catalyzes the attachment of serine to tRNA(Ser). Is also able to aminoacylate tRNA(Sec) with serine, to form the misacylated tRNA L-seryl-tRNA(Sec), which will be further converted into selenocysteinyl-tRNA(Sec). This Thermococcus sibiricus (strain DSM 12597 / MM 739) protein is Serine--tRNA ligase.